Consider the following 931-residue polypeptide: Isoleucine--tRNA ligase (931 aa).

The short motif at 58 to 68 (PYANGHLHCGH) is the 'HIGH' region element. E559 is a binding site for L-isoleucyl-5'-AMP. The 'KMSKS' region signature appears at 600–604 (KLSKS). K603 serves as a coordination point for ATP. Zn(2+) is bound by residues C894, C897, C914, and C917.

Belongs to the class-I aminoacyl-tRNA synthetase family. IleS type 1 subfamily. Monomer. Zn(2+) is required as a cofactor.

The protein localises to the cytoplasm. The catalysed reaction is tRNA(Ile) + L-isoleucine + ATP = L-isoleucyl-tRNA(Ile) + AMP + diphosphate. Functionally, catalyzes the attachment of isoleucine to tRNA(Ile). As IleRS can inadvertently accommodate and process structurally similar amino acids such as valine, to avoid such errors it has two additional distinct tRNA(Ile)-dependent editing activities. One activity is designated as 'pretransfer' editing and involves the hydrolysis of activated Val-AMP. The other activity is designated 'posttransfer' editing and involves deacylation of mischarged Val-tRNA(Ile). The chain is Isoleucine--tRNA ligase from Legionella pneumophila (strain Corby).